Reading from the N-terminus, the 298-residue chain is Small ribosomal subunit biogenesis GTPase RsgA (298 aa).

The CP-type G domain maps to 67-228 (TNELIRPPIC…VADTPGFSSL (162 aa)). 116 to 119 (TKMD) contacts GTP. A Phosphothreonine modification is found at Thr-166. GTP is bound at residue 171–179 (GQSGVGKSS). The Zn(2+) site is built by Cys-252, Cys-257, His-259, and Cys-265.

The protein belongs to the TRAFAC class YlqF/YawG GTPase family. RsgA subfamily. In terms of assembly, monomer, but able to form dimers. Associates with 30S ribosomal subunit; a phospho-mimetic mutation increases association. Probably binds 16S rRNA. It depends on Zn(2+) as a cofactor. In terms of processing, in vitro phosphorylated mostly on Thr (with lower signal on Ser) by PrkC in the presence of poly-L-Lys or myelin basic protein, dephosphorylated by PrpC. Most in vitro phosphorylation occurs on Thr-166, in vivo phosphorylation has not been detected, but it might vary during the cell cycle.

It localises to the cytoplasm. Functionally, one of several proteins that assist in the late maturation steps of the functional core of the 30S ribosomal subunit. Helps release RbfA from mature subunits. May play a role in the assembly of ribosomal proteins into the subunit. Circularly permuted GTPase with a low level of activity and slow catalytic turnover, does not act on ATP. GTPase activity is stimulated by the presence of 30S or 70S ribosomes, phosphorylation increases stimulation. Depletion results in increased sensitivity to protein synthesis inhibitors that block the peptide channel or peptidyl transferase center on the ribosome, suggesting this protein functions in conjunction with the ribosome in vivo. Decreasing levels of protein lead to an increase in free 30S and 50S ribosomal subunits and a decrease in assembled 70S ribosomes. Suggested to serve as a specific transcription factor for proteins involved in late stages of peptidoglycan synthesis. The polypeptide is Small ribosomal subunit biogenesis GTPase RsgA (Bacillus subtilis (strain 168)).